The primary structure comprises 478 residues: ATP synthase subunit beta (478 aa).

Gly-158–Thr-165 provides a ligand contact to ATP.

This sequence belongs to the ATPase alpha/beta chains family. As to quaternary structure, F-type ATPases have 2 components, CF(1) - the catalytic core - and CF(0) - the membrane proton channel. CF(1) has five subunits: alpha(3), beta(3), gamma(1), delta(1), epsilon(1). CF(0) has three main subunits: a(1), b(2) and c(9-12). The alpha and beta chains form an alternating ring which encloses part of the gamma chain. CF(1) is attached to CF(0) by a central stalk formed by the gamma and epsilon chains, while a peripheral stalk is formed by the delta and b chains.

The protein localises to the cell inner membrane. The enzyme catalyses ATP + H2O + 4 H(+)(in) = ADP + phosphate + 5 H(+)(out). Functionally, produces ATP from ADP in the presence of a proton gradient across the membrane. The catalytic sites are hosted primarily by the beta subunits. The protein is ATP synthase subunit beta of Rhizobium johnstonii (strain DSM 114642 / LMG 32736 / 3841) (Rhizobium leguminosarum bv. viciae).